The sequence spans 316 residues: Pantothenate kinase (316 aa).

Position 95–102 (95–102 (GSVAVGKS)) interacts with ATP.

This sequence belongs to the prokaryotic pantothenate kinase family.

The protein localises to the cytoplasm. The enzyme catalyses (R)-pantothenate + ATP = (R)-4'-phosphopantothenate + ADP + H(+). Its pathway is cofactor biosynthesis; coenzyme A biosynthesis; CoA from (R)-pantothenate: step 1/5. In Shewanella loihica (strain ATCC BAA-1088 / PV-4), this protein is Pantothenate kinase.